The following is a 360-amino-acid chain: Sorbitol dehydrogenase (360 aa).

Cys-42 is a binding site for Zn(2+). Tyr-48 contacts substrate. Residues His-67 and Glu-68 each coordinate Zn(2+). Glu-153 provides a ligand contact to substrate. NAD(+) contacts are provided by residues Asp-201, Arg-206, 277–279 (AGN), and 301–303 (SFR). Positions 303 and 304 each coordinate substrate.

It belongs to the zinc-containing alcohol dehydrogenase family. As to quaternary structure, homotetramer. Zn(2+) is required as a cofactor.

The catalysed reaction is keto-D-fructose + NADH + H(+) = D-sorbitol + NAD(+). In terms of biological role, polyol dehydrogenase that catalyzes the reversible NAD(+)-dependent oxidation of various sugar alcohols. Is active with D-sorbitol (D-glucitol) as substrate, leading to the C2-oxidized product D-fructose. Suppresses growth arrest induced by a p53 tumor mutant in fission yeast. The sequence is that of Sorbitol dehydrogenase (tms1) from Schizosaccharomyces pombe (strain 972 / ATCC 24843) (Fission yeast).